The following is a 326-amino-acid chain: Pyruvate dehydrogenase E1 component subunit alpha (326 aa).

In terms of assembly, heterodimer of an alpha and a beta chain. It depends on thiamine diphosphate as a cofactor.

It catalyses the reaction N(6)-[(R)-lipoyl]-L-lysyl-[protein] + pyruvate + H(+) = N(6)-[(R)-S(8)-acetyldihydrolipoyl]-L-lysyl-[protein] + CO2. Its function is as follows. The pyruvate dehydrogenase complex catalyzes the overall conversion of pyruvate to acetyl-CoA and CO(2). It contains multiple copies of three enzymatic components: pyruvate dehydrogenase (E1), dihydrolipoamide acetyltransferase (E2) and lipoamide dehydrogenase (E3). This Rickettsia felis (strain ATCC VR-1525 / URRWXCal2) (Rickettsia azadi) protein is Pyruvate dehydrogenase E1 component subunit alpha (pdhA).